The chain runs to 648 residues: MEYINTRQKEILYLLLSEPDDYLVVQDFADRVQCSEKTIRNDLKVIEDYLNEHSHAQLIRKPGLGVYLHIEEQERTWLSQQLHTEHFSSRQRSDKERMLHIAYDLLMNPKPVSAKDIAARHFVNRSSIKKDLYAVEEWLKRFDLTLVSRQRLGLKVEGNERNKRKALARISDLIHNTAFTSQFIKSKFLHYEVDFVTKEIKSLQKKHSLYFTDETFESLLLHTLLMVRRIKMKQPISLSPKEMAAVKKKKEYQWTFACLQRLEPVFAIRFPEEEAVYLTLHILGGKVRYPLQTEENLENAVLPKVVGHLINRVSELKMMDFHKDQDLINGLNIHLNTVLQRLSYDLSVANPMLNDIKKMYPYLFHLIIDVLEDINQTFDLHIPEEEAAYLTLHFQAAIERMQGSSETHKKAVIVCHMGIGMSQLLRTKIERKYHQIAVMACIAKADLKDYIKKHEDIDLVISTIALENITVPHIVVSPLLEPGEEKKLSAFIRQLGESHRQKQKTFQMLNNTTPFLVFLQQEAEHRYKLIEQLATALFEKGYVDKDYAVHAVMREKMSATNIGSGIAIPHANAKFIKQSAIAIATLKEPLEWGNEKVSLVFMLAVKHEDQTMTKQLFSELSYLSEQPAFVQKLTKETNVMTFLSHLDY.

2 consecutive PRD domains span residues 187-292 and 297-404; these read KFLH…YPLQ and LENA…MQGS. Residues histidine 222, histidine 281, histidine 334, and histidine 393 each carry the phosphohistidine; by HPr modification. Positions 409-500 constitute a PTS EIIB type-2 domain; that stretch reads KKAVIVCHMG…FIRQLGESHR (92 aa). A Phosphocysteine; by EIIA modification is found at cysteine 415. One can recognise a PTS EIIA type-2 domain in the interval 510 to 648; sequence NNTTPFLVFL…VMTFLSHLDY (139 aa). Histidine 570 carries the post-translational modification Phosphohistidine; by EIIB.

The protein belongs to the transcriptional antiterminator BglG family.

It catalyses the reaction D-mannose(out) + N(pros)-phospho-L-histidyl-[protein] = D-mannose 6-phosphate(in) + L-histidyl-[protein]. Its activity is regulated as follows. The regulatory activity of ManR is modulated by phosphorylation and dephosphorylation of the various ManR domains. It becomes activated via phosphoryl group transfer from PEP, EI and HPr on the two conserved histidine residues in the PRD 2 domain, whereas phosphorylation of the EIIA-like domain on His-570 by the PTS EIIB-Man domain of ManP inactivates ManR. Positively regulates the expression of the mannose operon that consists of three genes, manP, manA, and yjdF, which are responsible for the transport and utilization of mannose. Also activates its own expression. The sequence is that of Transcriptional regulator ManR (manR) from Bacillus subtilis (strain 168).